The primary structure comprises 158 residues: Transcription factor BTF3 homolog 4 (158 aa).

Positions 33–98 constitute an NAC-A/B domain; the sequence is TADDKKLQSS…AEAKPITEML (66 aa). Residues 124–158 form a disordered region; that stretch reads VLDSKAPKSEDIDEEDDDVPDLAENFDEASKNEAN. Over residues 134–150 the composition is skewed to acidic residues; it reads DIDEEDDDVPDLAENFD.

The protein belongs to the NAC-beta family.

This is Transcription factor BTF3 homolog 4 (BTF3L4) from Gallus gallus (Chicken).